The following is a 404-amino-acid chain: Cysteine desulfurase IscS (404 aa).

Residues 75–76 (AT), Asn155, Gln183, and 203–205 (SSH) contribute to the pyridoxal 5'-phosphate site. At Lys206 the chain carries N6-(pyridoxal phosphate)lysine. Residue Thr243 participates in pyridoxal 5'-phosphate binding. Cys328 functions as the Cysteine persulfide intermediate in the catalytic mechanism. Cys328 contributes to the [2Fe-2S] cluster binding site.

The protein belongs to the class-V pyridoxal-phosphate-dependent aminotransferase family. NifS/IscS subfamily. In terms of assembly, homodimer. Forms a heterotetramer with IscU, interacts with other sulfur acceptors. The cofactor is pyridoxal 5'-phosphate.

It localises to the cytoplasm. It catalyses the reaction (sulfur carrier)-H + L-cysteine = (sulfur carrier)-SH + L-alanine. The protein operates within cofactor biosynthesis; iron-sulfur cluster biosynthesis. Master enzyme that delivers sulfur to a number of partners involved in Fe-S cluster assembly, tRNA modification or cofactor biosynthesis. Catalyzes the removal of elemental sulfur atoms from cysteine to produce alanine. Functions as a sulfur delivery protein for Fe-S cluster synthesis onto IscU, an Fe-S scaffold assembly protein, as well as other S acceptor proteins. This Haemophilus influenzae (strain PittGG) protein is Cysteine desulfurase IscS.